We begin with the raw amino-acid sequence, 155 residues long: MATRALLAVIYASPNRCYISPSRIKIQSLTCSSSSHYYQRQSRKNHRIARSYSSDSDSSVLQPPDVARLAQTARISLTPAEIEECETKIRRVIDWFGQLQQVDVNSVEPAIRAEMDGGNLREDAPETFDNRDSIRASIPSFEDAYLKVPKILNKE.

A chloroplast and mitochondrion-targeting transit peptide spans 1 to 52; sequence MATRALLAVIYASPNRCYISPSRIKIQSLTCSSSSHYYQRQSRKNHRIARSY.

The protein belongs to the GatC family. Subunit of the heterotrimeric GatCAB amidotransferase (AdT) complex, composed of A, B and C subunits.

The protein localises to the mitochondrion. It localises to the plastid. Its subcellular location is the chloroplast. The enzyme catalyses L-glutamyl-tRNA(Gln) + L-glutamine + ATP + H2O = L-glutaminyl-tRNA(Gln) + L-glutamate + ADP + phosphate + H(+). Functionally, allows the formation of correctly charged Gln-tRNA(Gln) through the transamidation of misacylated Glu-tRNA(Gln) in chloroplasts and mitochondria. The reaction takes place in the presence of glutamine and ATP through an activated gamma-phospho-Glu-tRNA(Gln). In Arabidopsis thaliana (Mouse-ear cress), this protein is Glutamyl-tRNA(Gln) amidotransferase subunit C, chloroplastic/mitochondrial.